Reading from the N-terminus, the 390-residue chain is Succinate--CoA ligase [ADP-forming] subunit beta (390 aa).

The ATP-grasp domain maps to 9–245 (KHLLKKYNIP…TTQEDEHETM (237 aa)). ATP contacts are provided by residues K46, 53 to 55 (GRG), E99, S102, and E107. The Mg(2+) site is built by N200 and D214. Substrate-binding positions include N265 and 322–324 (GIV).

This sequence belongs to the succinate/malate CoA ligase beta subunit family. As to quaternary structure, heterotetramer of two alpha and two beta subunits. It depends on Mg(2+) as a cofactor.

The catalysed reaction is succinate + ATP + CoA = succinyl-CoA + ADP + phosphate. It catalyses the reaction GTP + succinate + CoA = succinyl-CoA + GDP + phosphate. It functions in the pathway carbohydrate metabolism; tricarboxylic acid cycle; succinate from succinyl-CoA (ligase route): step 1/1. In terms of biological role, succinyl-CoA synthetase functions in the citric acid cycle (TCA), coupling the hydrolysis of succinyl-CoA to the synthesis of either ATP or GTP and thus represents the only step of substrate-level phosphorylation in the TCA. The beta subunit provides nucleotide specificity of the enzyme and binds the substrate succinate, while the binding sites for coenzyme A and phosphate are found in the alpha subunit. This chain is Succinate--CoA ligase [ADP-forming] subunit beta, found in Coxiella burnetii (strain RSA 331 / Henzerling II).